The primary structure comprises 158 residues: Cysteine proteinase inhibitor 4 (158 aa).

A signal peptide spans 1–24 (MAARCPVGVASVLLLIVLVTVASA). Residues 26–51 (SGARSGGGGGGGIRELRGGGAGRRVG) form a disordered region. Gly residues predominate over residues 29–49 (RSGGGGGGGIRELRGGGAGRR). The Cystatin domain occupies 51–116 (GGRTEVRDVE…KYYLRVAAAE (66 aa)). The Secondary area of contact signature appears at 101 to 105 (QVVSG).

Belongs to the cystatin family. Phytocystatin subfamily.

The protein resides in the secreted. Specific inhibitor of cysteine proteinases. Probably involved in the regulation of endogenous processes and in defense against pests and pathogens. This chain is Cysteine proteinase inhibitor 4, found in Oryza sativa subsp. japonica (Rice).